The sequence spans 549 residues: Eukaryotic translation initiation factor 3 subunit D (549 aa).

A disordered region spans residues 101-130; the sequence is QSYQRGRARGQRGRGARGARTPGGMTTLNK. The span at 106–117 shows a compositional bias: basic residues; that stretch reads GRARGQRGRGAR. Residues 277–291 are RNA gate; that stretch reads EFDLLTVNETSVEPP. The segment at 521–549 is disordered; the sequence is ESDASEESGDEQADTPFAPLYSYGNSKRV. The segment covering 523–533 has biased composition (acidic residues); sequence DASEESGDEQA.

This sequence belongs to the eIF-3 subunit D family. In terms of assembly, component of the eukaryotic translation initiation factor 3 (eIF-3) complex.

The protein resides in the cytoplasm. Functionally, mRNA cap-binding component of the eukaryotic translation initiation factor 3 (eIF-3) complex, which is involved in protein synthesis of a specialized repertoire of mRNAs and, together with other initiation factors, stimulates binding of mRNA and methionyl-tRNAi to the 40S ribosome. The eIF-3 complex specifically targets and initiates translation of a subset of mRNAs involved in cell proliferation. In the eIF-3 complex, eif3d specifically recognizes and binds the 7-methylguanosine cap of a subset of mRNAs. This Bombyx mori (Silk moth) protein is Eukaryotic translation initiation factor 3 subunit D.